We begin with the raw amino-acid sequence, 831 residues long: Periplasmic nitrate reductase (831 aa).

Residues 1 to 35 (MTISDSRRTFLKASAAAATASAAGIPLANGTAAEA) constitute a signal peptide (tat-type signal). In terms of domain architecture, 4Fe-4S Mo/W bis-MGD-type spans 42–98 (IRWDKAACRFCGTGCSVLVGTKEGRVVATQGDPDAPVNRGLNCIKGYFLSKIMYGED). The [4Fe-4S] cluster site is built by Cys49, Cys52, Cys56, and Cys84. Mo-bis(molybdopterin guanine dinucleotide)-binding positions include Lys86, Gln153, Asn178, Cys182, 215 to 222 (WGSNMAEM), 246 to 250 (STYEH), 265 to 267 (QTD), Met375, Gln379, Asn485, 511 to 512 (SD), Lys534, Asp561, and 721 to 730 (TGRVLEHWHS). Trp797 is a binding site for substrate. The Mo-bis(molybdopterin guanine dinucleotide) site is built by Asn805 and Lys822.

This sequence belongs to the prokaryotic molybdopterin-containing oxidoreductase family. NasA/NapA/NarB subfamily. As to quaternary structure, component of the periplasmic nitrate reductase NapAB complex composed of NapA and NapB. [4Fe-4S] cluster is required as a cofactor. Mo-bis(molybdopterin guanine dinucleotide) serves as cofactor. Post-translationally, predicted to be exported by the Tat system. The position of the signal peptide cleavage has not been experimentally proven.

It is found in the periplasm. The enzyme catalyses 2 Fe(II)-[cytochrome] + nitrate + 2 H(+) = 2 Fe(III)-[cytochrome] + nitrite + H2O. Catalytic subunit of the periplasmic nitrate reductase complex NapAB. Receives electrons from NapB and catalyzes the reduction of nitrate to nitrite. This chain is Periplasmic nitrate reductase, found in Dinoroseobacter shibae (strain DSM 16493 / NCIMB 14021 / DFL 12).